The primary structure comprises 473 residues: 3-isopropylmalate dehydratase large subunit (473 aa).

Residues 289-319 (TVTWGTTPGQTAGITEPIPDPDDLPEEDRDT) are disordered. Residues 291-301 (TWGTTPGQTAG) are compositionally biased toward polar residues. The segment covering 307 to 317 (PDPDDLPEEDR) has biased composition (acidic residues). The [4Fe-4S] cluster site is built by Cys348, Cys408, and Cys411.

Belongs to the aconitase/IPM isomerase family. LeuC type 1 subfamily. Heterodimer of LeuC and LeuD. [4Fe-4S] cluster is required as a cofactor.

The enzyme catalyses (2R,3S)-3-isopropylmalate = (2S)-2-isopropylmalate. It functions in the pathway amino-acid biosynthesis; L-leucine biosynthesis; L-leucine from 3-methyl-2-oxobutanoate: step 2/4. Functionally, catalyzes the isomerization between 2-isopropylmalate and 3-isopropylmalate, via the formation of 2-isopropylmaleate. The polypeptide is 3-isopropylmalate dehydratase large subunit (Halorubrum lacusprofundi (strain ATCC 49239 / DSM 5036 / JCM 8891 / ACAM 34)).